A 415-amino-acid polypeptide reads, in one-letter code: Packaging protein 3 (415 aa).

Disordered regions lie at residues 1 to 56 (MHPV…RRRA) and 66 to 85 (EGLA…VQLK). An interaction with packaging protein 1 region spans residues 1-173 (MHPVLRQMRP…VNQEINFQKS (173 aa)). The segment covering 31–46 (PTASGGATSAADAAAD) has biased composition (low complexity). At Ser75 the chain carries Phosphoserine; by host. Over residues 76–85 (PERHPRVQLK) the composition is skewed to basic and acidic residues. Position 360 is a phosphoserine; by host (Ser360). Over residues 381–394 (GAGPGLAVAPARAG) the composition is skewed to low complexity. The interval 381–415 (GAGPGLAVAPARAGNVGGVEEYDEDDEYEPEDGEY) is disordered. The span at 400–415 (EEYDEDDEYEPEDGEY) shows a compositional bias: acidic residues.

Belongs to the adenoviridae packaging protein 3 family. As to quaternary structure, part of the genome packaging complex composed of packaging proteins 1, 2 and 3; this complex specifically binds to the packaging sequence on the left end of viral genomic DNA and performs packaging of the viral genome. Interacts with hexon-linking protein IIIa; this interaction is required to promote correct genome packaging. Cleaved at different sites by the viral protease during virion maturation.

The protein resides in the host nucleus. In terms of biological role, involved in viral genome packaging through its interaction with packaging proteins 1 and 2. After proteolytic cleavage by adenovirus protease, L1 52/55k protein is removed from the capsid during viral maturation. This Human adenovirus C serotype 2 (HAdV-2) protein is Packaging protein 3.